The sequence spans 427 residues: Glutamate-1-semialdehyde 2,1-aminomutase (427 aa).

Position 265 is an N6-(pyridoxal phosphate)lysine (Lys265).

Belongs to the class-III pyridoxal-phosphate-dependent aminotransferase family. HemL subfamily. Homodimer. Pyridoxal 5'-phosphate serves as cofactor.

Its subcellular location is the cytoplasm. The catalysed reaction is (S)-4-amino-5-oxopentanoate = 5-aminolevulinate. Its pathway is porphyrin-containing compound metabolism; protoporphyrin-IX biosynthesis; 5-aminolevulinate from L-glutamyl-tRNA(Glu): step 2/2. The polypeptide is Glutamate-1-semialdehyde 2,1-aminomutase (Neisseria meningitidis serogroup B (strain ATCC BAA-335 / MC58)).